The following is a 190-amino-acid chain: Probable RNA-binding protein 18 (190 aa).

In terms of domain architecture, RRM spans 25-106 (HRLWIGNLDP…KKLVVRWAHA (82 aa)). The disordered stretch occupies residues 166–190 (VYSYFKPPDKKRTTPYSRTAWKSRR).

The polypeptide is Probable RNA-binding protein 18 (RBM18) (Bos taurus (Bovine)).